Consider the following 510-residue polypeptide: Inositol-3-phosphate synthase (510 aa).

24 residues coordinate NAD(+): Gly-70, Gly-71, Asn-72, Asn-73, Asp-143, Ile-180, Gln-190, Arg-193, Thr-230, Ala-231, Asn-232, Thr-233, Gly-281, Ser-282, Asp-306, Ser-309, Asn-340, Asn-341, Asp-342, Lys-355, Gly-393, Asp-394, Asp-422, and Ser-423.

Belongs to the myo-inositol 1-phosphate synthase family. NAD(+) serves as cofactor.

It is found in the cytoplasm. The protein localises to the cytosol. It localises to the nucleus. It catalyses the reaction D-glucose 6-phosphate = 1D-myo-inositol 3-phosphate. It functions in the pathway polyol metabolism; myo-inositol biosynthesis; myo-inositol from D-glucose 6-phosphate: step 1/2. Its function is as follows. Key enzyme in myo-inositol biosynthesis pathway that catalyzes the conversion of glucose 6-phosphate to 1-myo-inositol 1-phosphate in a NAD-dependent manner. In Spirodela polyrhiza (Giant duckweed), this protein is Inositol-3-phosphate synthase (TUR1).